The primary structure comprises 155 residues: Endoribonuclease YbeY (155 aa).

Zn(2+)-binding residues include His114, His118, and His124.

It belongs to the endoribonuclease YbeY family. Zn(2+) serves as cofactor.

The protein localises to the cytoplasm. Functionally, single strand-specific metallo-endoribonuclease involved in late-stage 70S ribosome quality control and in maturation of the 3' terminus of the 16S rRNA. In Erwinia tasmaniensis (strain DSM 17950 / CFBP 7177 / CIP 109463 / NCPPB 4357 / Et1/99), this protein is Endoribonuclease YbeY.